The following is a 540-amino-acid chain: Phenylalanine--tRNA ligase beta subunit (540 aa).

Positions 268 to 342 (LRHTSVPFSL…MAYGYDRFTL (75 aa)) constitute a B5 domain. Positions 320, 326, 329, and 330 each coordinate Mg(2+).

This sequence belongs to the phenylalanyl-tRNA synthetase beta subunit family. Type 2 subfamily. Tetramer of two alpha and two beta subunits. It depends on Mg(2+) as a cofactor.

Its subcellular location is the cytoplasm. It catalyses the reaction tRNA(Phe) + L-phenylalanine + ATP = L-phenylalanyl-tRNA(Phe) + AMP + diphosphate + H(+). The protein is Phenylalanine--tRNA ligase beta subunit of Metallosphaera sedula (strain ATCC 51363 / DSM 5348 / JCM 9185 / NBRC 15509 / TH2).